A 500-amino-acid chain; its full sequence is MLSNARIIAAGCIAAGSLVAAGPCDIYSSGGTPCVAAHSTTRALFSAYTGPLYQVKRGSDGATTAISPLSSGVANAAAQDAFCAGTTCLITIIYDQSGRGNHLTQAPPGGFSGPESNGYDNLASAIGAPVTLNGQKAYGVFVSPGTGYRNNAASGTAKGDAAEGMYAVLDGTHYNGACCFDYGNAETNSRDTGNGHMEAIYFGDSTVWGTGSGKGPWIMADLENGLFSGSSPGNNAGDPSISYRFVTAAIKGQPNQWAIRGGNAASGSLSTFYSGARPQVSGYNPMSKEGAIILGIGGDNSNGAQGTFYEGVMTSGYPSDATENSVQANIVAARYAVAPLTSGPALTVGSSISLRATTACCTTRYIAHSGSTVNTQVVSSSSATALKQQASWTVRAGLANNACFSFESRDTSGSYIRHSNFGLVLNANDGSKLFAEDATFCTQAGINGQGSSIRSWSYPTRYFRHYNNTLYIASNGGVHVFDATAAFNDDVSFVVSGGFA.

A signal peptide spans 1-21 (MLSNARIIAAGCIAAGSLVAA). N-linked (GlcNAc...) asparagine glycosylation is present at Asn-467.

Belongs to the glycosyl hydrolase 54 family.

The catalysed reaction is Hydrolysis of terminal non-reducing alpha-L-arabinofuranoside residues in alpha-L-arabinosides.. It functions in the pathway glycan metabolism; L-arabinan degradation. This is Alpha-L-arabinofuranosidase (abf1) from Hypocrea jecorina (Trichoderma reesei).